A 460-amino-acid polypeptide reads, in one-letter code: Proline--tRNA ligase (460 aa).

The protein belongs to the class-II aminoacyl-tRNA synthetase family. ProS type 3 subfamily. Homodimer.

The protein localises to the cytoplasm. The enzyme catalyses tRNA(Pro) + L-proline + ATP = L-prolyl-tRNA(Pro) + AMP + diphosphate. Functionally, catalyzes the attachment of proline to tRNA(Pro) in a two-step reaction: proline is first activated by ATP to form Pro-AMP and then transferred to the acceptor end of tRNA(Pro). The protein is Proline--tRNA ligase of Methanococcus maripaludis (strain C6 / ATCC BAA-1332).